Here is a 71-residue protein sequence, read N- to C-terminus: Protein DP71L (71 aa).

Important for host CHOP inhibition stretches follow at residues 16–18 (VRF) and 57–61 (LSAVL).

It belongs to the asfivirus DP71L family. In terms of assembly, interacts (via C-terminus) with host PPP1CB.

In terms of biological role, interacts with the host phosphatase PP1 catalytic subunit (PPP1CB) and recruits it to dephosphorylate EIF2S1/eIF2alpha and therefore restores the host translation that has been shut-down by the host. Also inhibits the EIF2S1/eIF2alpha-ATF4-DDIT3/CHOP pathway. The protein is Protein DP71L of Ornithodoros (relapsing fever ticks).